A 638-amino-acid chain; its full sequence is Zinc finger protein 143 (638 aa).

Position 1 is an N-acetylmethionine (Met-1). Residue Lys-213 forms a Glycyl lysine isopeptide (Lys-Gly) (interchain with G-Cter in SUMO2) linkage. 4 consecutive C2H2-type zinc fingers follow at residues 237–261, 267–291, 297–321, and 327–351; these read FRCE…ERSH, YQCE…VRTH, YRCS…IRTH, and FKCP…VRTH. Residue Thr-352 is modified to Phosphothreonine. 3 C2H2-type zinc fingers span residues 357–381, 387–411, and 417–440; these read YYCT…VRIH, YVCT…HVVH, and YNCN…RTAH. A Glycyl lysine isopeptide (Lys-Gly) (interchain with G-Cter in SUMO2) cross-link involves residue Lys-406.

The protein belongs to the GLI C2H2-type zinc-finger protein family. As to quaternary structure, interacts with CHD8. Forms a complex with HCFC1 and ZNF143. As to expression, expressed in all tissues tested, with the strongest expression in ovary.

It localises to the nucleus. Functionally, transcriptional activator. Activates the gene for selenocysteine tRNA (tRNAsec). Binds to the SPH motif of small nuclear RNA (snRNA) gene promoters. Participates in efficient U6 RNA polymerase III transcription via its interaction with CHD8. In complex with HCFC1 and ZNF143, regulates the expression of several genes, including AP2S1, ESCO2, OPHN1, RBL1, UBXN8 and ZNF32. In Homo sapiens (Human), this protein is Zinc finger protein 143 (ZNF143).